We begin with the raw amino-acid sequence, 142 residues long: Large ribosomal subunit protein uL13 (142 aa).

It belongs to the universal ribosomal protein uL13 family. In terms of assembly, part of the 50S ribosomal subunit.

This protein is one of the early assembly proteins of the 50S ribosomal subunit, although it is not seen to bind rRNA by itself. It is important during the early stages of 50S assembly. This is Large ribosomal subunit protein uL13 from Burkholderia mallei (strain NCTC 10247).